The primary structure comprises 556 residues: Formate--tetrahydrofolate ligase (556 aa).

65–72 (TPAGEGKS) serves as a coordination point for ATP.

The protein belongs to the formate--tetrahydrofolate ligase family.

The catalysed reaction is (6S)-5,6,7,8-tetrahydrofolate + formate + ATP = (6R)-10-formyltetrahydrofolate + ADP + phosphate. The protein operates within one-carbon metabolism; tetrahydrofolate interconversion. This Enterococcus faecalis (strain ATCC 700802 / V583) protein is Formate--tetrahydrofolate ligase.